The sequence spans 240 residues: UPF0309 protein in nagA 3'region (240 aa).

The region spanning 31–206 is the SIS domain; the sequence is IVKRLVQGGI…CAQIIEILHE (176 aa).

It belongs to the UPF0309 family.

This Lysinibacillus sphaericus (Bacillus sphaericus) protein is UPF0309 protein in nagA 3'region.